The chain runs to 740 residues: DNA (cytosine-5)-methyltransferase 3C (740 aa).

Disordered stretches follow at residues 75–99 and 248–312; these read LTGD…PVMP and FKPT…DVTN. Residues 309-441 form the ADD domain; the sequence is DVTNNKGNLE…LQDFFTTDPD (133 aa). The GATA-type; atypical zinc-finger motif lies at 320 to 350; the sequence is HCLSCGRKDPVSFHPLFEGGLCQSCRDRFLE. Residues 361–417 form a PHD-type; atypical zinc finger; that stretch reads QSYCTVCCEGRELLLCSNTSCCRCFCVECLEVLVGAGTAEDVKLQEPWSCYMCLPQR. One can recognise an SAM-dependent MTase C5-type domain in the interval 462–740; that stretch reads IRVLSLFDGI…APLKDHFACE (279 aa). The S-adenosyl-L-methionine site is built by I471, T473, E492, D514, and I515. C538 is a catalytic residue. S-adenosyl-L-methionine-binding residues include R719 and W721.

This sequence belongs to the class I-like SAM-binding methyltransferase superfamily. C5-methyltransferase family. Homodimer. Interacts with DNMT3L. Interacts with SPOCD1; recruiting Dnmt3C to transposons. Specifically expressed in testis.

The protein resides in the nucleus. It catalyses the reaction a 2'-deoxycytidine in DNA + S-adenosyl-L-methionine = a 5-methyl-2'-deoxycytidine in DNA + S-adenosyl-L-homocysteine + H(+). Functionally, DNA methyltransferase that specifically methylates the promoters of evolutionarily young retrotransposons in the male germline. De novo methylation and subsequent repression of transposable elements prevents their mobilization, which is essential for germline integrity. Compared to Dnmt3a and Dnmt3b, shows lower DNA methyltransferase efficiency. This is DNA (cytosine-5)-methyltransferase 3C from Mus musculus (Mouse).